Reading from the N-terminus, the 84-residue chain is MKTLLLTLVVVTIVCLDLGYTMKCKICHFDTCRAGELKVCASGEKYCFKESWREAREVKIIRGCSSSCPEKKNVFCCSTNDCNW.

The signal sequence occupies residues 1 to 21 (MKTLLLTLVVVTIVCLDLGYT). 5 cysteine pairs are disulfide-bonded: cysteine 24-cysteine 47, cysteine 27-cysteine 32, cysteine 40-cysteine 64, cysteine 68-cysteine 76, and cysteine 77-cysteine 82.

It belongs to the three-finger toxin family. Ancestral subfamily. Orphan group IV sub-subfamily. As to expression, expressed by the venom gland.

The protein localises to the secreted. Functionally, binds and inhibits muscular and neuronal nicotinic acetylcholine receptors (nAChR). The chain is Neurotoxin BM10-1-like from Bungarus multicinctus (Many-banded krait).